The sequence spans 559 residues: Nuclear envelope integral membrane protein (559 aa).

The signal sequence occupies residues 1–15 (MRLLTLALLVAGSLA). Residues asparagine 67, asparagine 81, and asparagine 114 are each glycosylated (N-linked (GlcNAc...) asparagine). Transmembrane regions (helical) follow at residues 164–184 (YTSGCSFGLLASLLLVAFIVW), 192–212 (IGVPILIGGWSVSLYMLHFAW), 218–238 (IMIEYQKYVIGYFATVLLISM), 267–287 (LIYFSVQMVEVSTGTIGALII), and 290–310 (ICRGFLFAGIRWYFVGLKAVW). N-linked (GlcNAc...) asparagine glycosylation is found at asparagine 408 and asparagine 465. Disordered stretches follow at residues 475-494 (RRDSTPRHGNFQSEHRPRMP) and 510-559 (KNGR…DADE). Residues 517 to 526 (PSSSTASGMT) are compositionally biased toward polar residues. Residues 530–539 (YMRKARRIDA) are compositionally biased toward basic and acidic residues.

Belongs to the NEMP family.

The protein resides in the nucleus inner membrane. In terms of biological role, contributes to nuclear envelope stiffness in germ cells. Required for fertility. This is Nuclear envelope integral membrane protein from Caenorhabditis elegans.